We begin with the raw amino-acid sequence, 209 residues long: Chaperone protein TorD (209 aa).

This sequence belongs to the TorD/DmsD family. TorD subfamily.

Its subcellular location is the cytoplasm. Its function is as follows. Involved in the biogenesis of TorA. Acts on TorA before the insertion of the molybdenum cofactor and, as a result, probably favors a conformation of the apoenzyme that is competent for acquiring the cofactor. This Shewanella sp. (strain ANA-3) protein is Chaperone protein TorD.